Reading from the N-terminus, the 215-residue chain is 16S rRNA (adenine(1408)-N(1))-methyltransferase (215 aa).

Residues glycine 32, aspartate 55, 87-88, 102-107, and 191-193 contribute to the S-adenosyl-L-methionine site; these read AE, LMPWGS, and TSW.

Belongs to the methyltransferase superfamily. Kanamycin-apramycin resistance family.

It catalyses the reaction adenosine(1408) in 16S rRNA + S-adenosyl-L-methionine = N(1)-methyladenosine(1408) in 16S rRNA + S-adenosyl-L-homocysteine + H(+). Specifically methylates the N(1) position of adenine 1408 in 16S rRNA. Confers resistance to various aminoglycosides. The sequence is that of 16S rRNA (adenine(1408)-N(1))-methyltransferase (kamB) from Streptoalloteichus hindustanus.